Consider the following 198-residue polypeptide: NAD(P)H dehydrogenase (quinone) (198 aa).

The region spanning 6 to 190 is the Flavodoxin-like domain; the sequence is ILVLYYSRHG…LCRALGKRLA (185 aa). FMN is bound by residues 12–17, 79–81, 114–120, and H135; these read SRHGAT, TRF, and STASLHG.

Belongs to the WrbA family. In terms of assembly, homodimer. FMN serves as cofactor.

It catalyses the reaction a quinone + NADH + H(+) = a quinol + NAD(+). It carries out the reaction a quinone + NADPH + H(+) = a quinol + NADP(+). The protein is NAD(P)H dehydrogenase (quinone) of Pseudomonas aeruginosa (strain ATCC 15692 / DSM 22644 / CIP 104116 / JCM 14847 / LMG 12228 / 1C / PRS 101 / PAO1).